The sequence spans 425 residues: 3-phosphoshikimate 1-carboxyvinyltransferase (425 aa).

3-phosphoshikimate is bound by residues lysine 21, serine 22, and arginine 26. Phosphoenolpyruvate is bound at residue lysine 21. Phosphoenolpyruvate is bound by residues glycine 91 and arginine 119. Residues serine 164, glutamine 166, aspartate 311, and lysine 338 each coordinate 3-phosphoshikimate. Residue glutamine 166 coordinates phosphoenolpyruvate. Aspartate 311 (proton acceptor) is an active-site residue. Phosphoenolpyruvate contacts are provided by arginine 342 and arginine 383.

This sequence belongs to the EPSP synthase family. In terms of assembly, monomer.

Its subcellular location is the cytoplasm. The catalysed reaction is 3-phosphoshikimate + phosphoenolpyruvate = 5-O-(1-carboxyvinyl)-3-phosphoshikimate + phosphate. Its pathway is metabolic intermediate biosynthesis; chorismate biosynthesis; chorismate from D-erythrose 4-phosphate and phosphoenolpyruvate: step 6/7. Functionally, catalyzes the transfer of the enolpyruvyl moiety of phosphoenolpyruvate (PEP) to the 5-hydroxyl of shikimate-3-phosphate (S3P) to produce enolpyruvyl shikimate-3-phosphate and inorganic phosphate. This chain is 3-phosphoshikimate 1-carboxyvinyltransferase, found in Campylobacter fetus subsp. fetus (strain 82-40).